The chain runs to 149 residues: Flagellar basal-body protein FlbY (149 aa).

As to quaternary structure, the basal body constitutes a major portion of the flagellar organelle and consists of five rings (E,L,P,S, and M) mounted on a central rod.

It localises to the bacterial flagellum basal body. This Caulobacter vibrioides (strain ATCC 19089 / CIP 103742 / CB 15) (Caulobacter crescentus) protein is Flagellar basal-body protein FlbY (flbY).